Here is an 81-residue protein sequence, read N- to C-terminus: ATP synthase subunit C, plastid (81 aa).

The next 2 membrane-spanning stretches (helical) occupy residues 3–23 (PLIP…ASIG) and 61–81 (EALT…NPFI).

This sequence belongs to the ATPase C chain family. F-type ATPases have 2 components, F(1) - the catalytic core - and F(0) - the membrane proton channel. F(1) has five subunits: alpha(3), beta(3), gamma(1), delta(1), epsilon(1). F(0) has four main subunits: a(1), b(1), b'(1) and c(10-14). The alpha and beta chains form an alternating ring which encloses part of the gamma chain. F(1) is attached to F(0) by a central stalk formed by the gamma and epsilon chains, while a peripheral stalk is formed by the delta, b and b' chains.

It is found in the plastid membrane. Its function is as follows. F(1)F(0) ATP synthase produces ATP from ADP in the presence of a proton or sodium gradient. F-type ATPases consist of two structural domains, F(1) containing the extramembraneous catalytic core and F(0) containing the membrane proton channel, linked together by a central stalk and a peripheral stalk. During catalysis, ATP synthesis in the catalytic domain of F(1) is coupled via a rotary mechanism of the central stalk subunits to proton translocation. Key component of the F(0) channel; it plays a direct role in translocation across the membrane. A homomeric c-ring of between 10-14 subunits forms the central stalk rotor element with the F(1) delta and epsilon subunits. The chain is ATP synthase subunit C, plastid from Aneura mirabilis (Parasitic liverwort).